The sequence spans 46 residues: Protein PsbN (46 aa).

A helical membrane pass occupies residues 10 to 30 (VSIAVLTALLGLTGFGIYTAF).

This sequence belongs to the PsbN family.

The protein resides in the cellular thylakoid membrane. May play a role in photosystem I and II biogenesis. The protein is Protein PsbN of Synechococcus sp. (strain RCC307).